A 72-amino-acid polypeptide reads, in one-letter code: MHNESTEHRIAELESRLAFQETTIEDLNAAITKHELELAKMREQLKIMVEKIKASQPSMIASQAEETPPPHY.

Belongs to the SlyX family.

In Cronobacter sakazakii (strain ATCC BAA-894) (Enterobacter sakazakii), this protein is Protein SlyX.